Consider the following 234-residue polypeptide: Ubiquitin domain-containing protein 2 (234 aa).

The disordered stretch occupies residues 1 to 46; that stretch reads MGGCVGAQHDSSGSLNENSEGTGVALGRNQPLKKEKPKWKSDYPMT. Polar residues predominate over residues 9–21; sequence HDSSGSLNENSEG. The span at 32–41 shows a compositional bias: basic and acidic residues; it reads LKKEKPKWKS. A Ubiquitin-like domain is found at 152-227; that stretch reads SQLRLRLSTG…VQVIMSQPLQ (76 aa).

It localises to the cytoplasm. In Bos taurus (Bovine), this protein is Ubiquitin domain-containing protein 2 (UBTD2).